Here is a 188-residue protein sequence, read N- to C-terminus: PRA1 family protein F4 (188 aa).

Positions Met-1–Ala-13 are enriched in polar residues. The tract at residues Met-1–Ala-25 is disordered. A run of 4 helical transmembrane segments spans residues Tyr-67–Trp-86, Ser-90–Leu-107, Ile-119–Thr-139, and Thr-142–Ile-162.

The protein belongs to the PRA1 family.

It localises to the endosome membrane. In terms of biological role, may be involved in both secretory and endocytic intracellular trafficking in the endosomal/prevacuolar compartments. In Arabidopsis thaliana (Mouse-ear cress), this protein is PRA1 family protein F4 (PRA1F4).